The following is a 161-amino-acid chain: Bifurcating [FeFe] hydrogenase gamma subunit (161 aa).

Residues cysteine 78, cysteine 83, cysteine 119, and cysteine 123 each coordinate [2Fe-2S] cluster.

It belongs to the complex I 24 kDa subunit family. Heterotrimer composed of HydA (alpha subunit), HydB (beta subunit) and HydC (gamma subunit). Near neutral and acidic pH conditions favor oligomerization of the heterotrimeric holoenzyme. [2Fe-2S] cluster serves as cofactor.

The protein resides in the cytoplasm. It catalyses the reaction 2 H2 + 2 oxidized [2Fe-2S]-[ferredoxin] + NAD(+) = 2 reduced [2Fe-2S]-[ferredoxin] + NADH + 3 H(+). Its function is as follows. Catalyzes the oxidation of the physiological electron carriers NADH and reduced ferredoxin, coupled to the production of H(2). Acts as a bifurcating [FeFe] hydrogenase, which uses the exergonic oxidation of reduced ferredoxin to drive the unfavorable oxidation of NADH to produce H(2). The gamma subunit might be the site where reduced ferredoxin is oxidized. The protein is Bifurcating [FeFe] hydrogenase gamma subunit of Thermotoga maritima (strain ATCC 43589 / DSM 3109 / JCM 10099 / NBRC 100826 / MSB8).